Here is a 508-residue protein sequence, read N- to C-terminus: UTP--glucose-1-phosphate uridylyltransferase (508 aa).

Ser-13 carries the post-translational modification Phosphoserine. UTP contacts are provided by residues 113–116, Lys-127, Gln-190, and Gly-222; that span reads LNGG. 115-116 provides a ligand contact to substrate; it reads GG. Mg(2+) is bound at residue Lys-127. Residues His-223 and 251–253 each bind substrate; that span reads NID. Asp-253 and Lys-396 together coordinate UTP. Asp-253 contributes to the Mg(2+) binding site. Lys-396 is an active-site residue. Residue Thr-426 is modified to Phosphothreonine. Ser-434 bears the Phosphoserine mark. N6-acetyllysine is present on Lys-438. A phosphoserine mark is found at Ser-448 and Ser-461. An oligomerization region spans residues 457 to 508; it reads HLTVSGDVTFGKNVSLKGTVIIIXNHGDRIDIPPGAVLENKIVSGNLRILDH. The critical for end-to-end subunit interaction stretch occupies residues 502 to 503; sequence NL.

This sequence belongs to the UDPGP type 1 family. Homooctamer.

Its subcellular location is the cytoplasm. The catalysed reaction is alpha-D-glucose 1-phosphate + UTP + H(+) = UDP-alpha-D-glucose + diphosphate. Its pathway is glycan biosynthesis; glycogen biosynthesis. UTP--glucose-1-phosphate uridylyltransferase catalyzing the conversion of glucose-1-phosphate into UDP-glucose, a crucial precursor for the production of glycogen. This is UTP--glucose-1-phosphate uridylyltransferase (UGP2) from Sus scrofa (Pig).